The primary structure comprises 311 residues: Taste receptor type 2 member 40 (311 aa).

At 1 to 9 the chain is on the extracellular side; it reads MSSLFSSFC. A helical membrane pass occupies residues 10 to 30; the sequence is LVIAIFESVVGLLGNGTIVAV. Over 31–55 the chain is Cytoplasmic; the sequence is SSTSCIRSKILSSYDVIVIFLSLSR. A helical transmembrane segment spans residues 56–76; that stretch reads FFLQLWMILDFLLIFFCQPSY. Residues 77–87 lie on the Extracellular side of the membrane; that stretch reads YEENLFVTFKT. A helical transmembrane segment spans residues 88–108; it reads VFIFLNSYSFWFAAWLSVFYC. Topologically, residues 109-128 are cytoplasmic; that stretch reads VKVASFTQSFLSWLKQRIAS. Residues 129-149 form a helical membrane-spanning segment; the sequence is LIPWMLITSSLFSFATSLPFF. The Extracellular portion of the chain corresponds to 150 to 178; it reads WDSYNAHSNFTTPLTMTNSSKRITTRKTN. The chain crosses the membrane as a helical span at residues 179-199; sequence LIFLILLCNVGIALPSIMLVF. Topologically, residues 200-235 are cytoplasmic; the sequence is SSILLIRSLWRHTRQMQNNATGFRDPSLEALIGAIK. The helical transmembrane segment at 236–256 threads the bilayer; sequence TVFSFLLLYITNFIALILILS. Over 257-266 the chain is Extracellular; sequence DTFVPLSTEE. The chain crosses the membrane as a helical span at residues 267–287; that stretch reads AICVVVVAACPAGQSMVLIWS. Topologically, residues 288 to 311 are cytoplasmic; it reads NPRFRELLSSILHYVNSCVRARCS.

Belongs to the G-protein coupled receptor T2R family. As to expression, expressed in the oral cavity, as well as in the gastrointestinal tract, including in the upper palate, tongue, proventriculus, ventriculus, duodenum, jejunum, ileum, cecum and colon.

The protein localises to the cell membrane. Bitter taste receptor. Binds quinine, dextromethorphan, diphenhydramine, diphenidol, chlorpheniramine, diphenidol, chloramphenicol, chloroquine and coumarin, this latter being a weak agonist, as well as epiquinidine, ethylhydrocupreine and quinidine. The chain is Taste receptor type 2 member 40 (TAS2R40) from Gallus gallus (Chicken).